The sequence spans 596 residues: M-phase inducer phosphatase (596 aa).

Ser-99 and Ser-178 each carry phosphoserine. The interval 174-221 is disordered; sequence LSSSSFDSYLRPNVSRSRSSGNAPPFLRSRSSSSYSINKKKGTSGGQA. The Rhodanese domain maps to 429–533; it reads IFDKCIIIDC…FYENHKNRCD (105 aa). Cys-480 (phosphocysteine intermediate) is an active-site residue.

This sequence belongs to the MPI phosphatase family. In terms of assembly, interacts with rad24 during G2 in a srk1-dependent manner; the interaction is increased during osmostress. Post-translationally, phosphorylated by srk1 in the N-terminus; phosphorylation promotes nuclear exclusion.

The protein resides in the cytoplasm. The protein localises to the nucleus. The enzyme catalyses O-phospho-L-tyrosyl-[protein] + H2O = L-tyrosyl-[protein] + phosphate. Its function is as follows. Tyrosine protein phosphatase which functions as a dosage-dependent inducer of mitotic and meiotic progression. Directly dephosphorylates cdc2 and stimulates its kinase activity. Required for the G2/M transition of the cell cycle. Required for induction of meiosis II. This Schizosaccharomyces pombe (strain 972 / ATCC 24843) (Fission yeast) protein is M-phase inducer phosphatase.